A 602-amino-acid polypeptide reads, in one-letter code: Elongation factor 4 (602 aa).

The tr-type G domain maps to 7 to 188 (ENIRNFSIIA…SIIRLVPPPK (182 aa)). GTP-binding positions include 19–24 (DHGKST) and 135–138 (NKID).

This sequence belongs to the TRAFAC class translation factor GTPase superfamily. Classic translation factor GTPase family. LepA subfamily.

The protein resides in the cell inner membrane. It catalyses the reaction GTP + H2O = GDP + phosphate + H(+). In terms of biological role, required for accurate and efficient protein synthesis under certain stress conditions. May act as a fidelity factor of the translation reaction, by catalyzing a one-codon backward translocation of tRNAs on improperly translocated ribosomes. Back-translocation proceeds from a post-translocation (POST) complex to a pre-translocation (PRE) complex, thus giving elongation factor G a second chance to translocate the tRNAs correctly. Binds to ribosomes in a GTP-dependent manner. The protein is Elongation factor 4 of Chlamydia trachomatis serovar A (strain ATCC VR-571B / DSM 19440 / HAR-13).